The chain runs to 268 residues: ELL-associated factor 1 (268 aa).

The disordered stretch occupies residues 106-268; the sequence is IQVKKTRAEG…LSESGSDSDD (163 aa). Positions 128–154 are enriched in pro residues; it reads ARPPQPSQPPPPPPPMPFRAPTKPPAG. Phosphoserine is present on S165. The span at 171–181 shows a compositional bias: basic and acidic residues; that stretch reads DDIKRELRAEV. The interval 182 to 262 is necessary for transactivation activity; the sequence is DIIEQMSSSS…LRNDLQLSES (81 aa). The segment covering 188–203 has biased composition (low complexity); sequence SSSSGSSSSDSESSSG. Residues 238–268 show a composition bias toward polar residues; sequence NGTSRPQGSSQLMNTLRNDLQLSESGSDSDD.

Belongs to the EAF family. As to quaternary structure, component of the super elongation complex (SEC), at least composed of EAF1, EAF2, CDK9, MLLT3/AF9, AFF (AFF1 or AFF4), the P-TEFb complex and ELL (ELL, ELL2 or ELL3). Interacts with ELL and ELL2.

Its subcellular location is the nucleus speckle. The protein localises to the nucleus. The protein resides in the cajal body. Its function is as follows. Acts as a transcriptional transactivator of ELL and ELL2 elongation activities. The chain is ELL-associated factor 1 (Eaf1) from Mus musculus (Mouse).